Reading from the N-terminus, the 142-residue chain is Large ribosomal subunit protein uL13 (142 aa).

Belongs to the universal ribosomal protein uL13 family. In terms of assembly, part of the 50S ribosomal subunit.

This protein is one of the early assembly proteins of the 50S ribosomal subunit, although it is not seen to bind rRNA by itself. It is important during the early stages of 50S assembly. This Aliivibrio salmonicida (strain LFI1238) (Vibrio salmonicida (strain LFI1238)) protein is Large ribosomal subunit protein uL13.